A 252-amino-acid polypeptide reads, in one-letter code: 2-succinyl-6-hydroxy-2,4-cyclohexadiene-1-carboxylate synthase (252 aa).

This sequence belongs to the AB hydrolase superfamily. MenH family. As to quaternary structure, monomer.

It carries out the reaction 5-enolpyruvoyl-6-hydroxy-2-succinyl-cyclohex-3-ene-1-carboxylate = (1R,6R)-6-hydroxy-2-succinyl-cyclohexa-2,4-diene-1-carboxylate + pyruvate. The protein operates within quinol/quinone metabolism; 1,4-dihydroxy-2-naphthoate biosynthesis; 1,4-dihydroxy-2-naphthoate from chorismate: step 3/7. It functions in the pathway quinol/quinone metabolism; menaquinone biosynthesis. In terms of biological role, catalyzes a proton abstraction reaction that results in 2,5-elimination of pyruvate from 2-succinyl-5-enolpyruvyl-6-hydroxy-3-cyclohexene-1-carboxylate (SEPHCHC) and the formation of 2-succinyl-6-hydroxy-2,4-cyclohexadiene-1-carboxylate (SHCHC). The polypeptide is 2-succinyl-6-hydroxy-2,4-cyclohexadiene-1-carboxylate synthase (Escherichia coli (strain ATCC 8739 / DSM 1576 / NBRC 3972 / NCIMB 8545 / WDCM 00012 / Crooks)).